The primary structure comprises 171 residues: Protein phosphatase 1 regulatory subunit 1A (171 aa).

At methionine 1 the chain carries N-acetylmethionine. The segment at 1–171 is disordered; that stretch reads MEPDNSPRKI…PLDSQGASLV (171 aa). Residues 9–12 form an essential for activity region; sequence KIQF. The segment covering 19 to 29 has biased composition (basic and acidic residues); that stretch reads PHLDPEAAEQI. Threonine 35 carries the phosphothreonine modification. The tract at residues 42–54 is essential for activity; that stretch reads TSDQSSPEIDEDR. Phosphoserine is present on residues serine 43, serine 46, serine 47, and serine 67. The span at 122-146 shows a compositional bias: polar residues; it reads GSASRPDTPGTAQKSAESNPKTQEQ. An interaction with PPP1R15A region spans residues 143–171; the sequence is TQEQCGVEPRTEDSSAHMLPLDSQGASLV.

This sequence belongs to the protein phosphatase inhibitor 1 family. Interacts with PPP1R15A. In terms of processing, phosphorylation of Thr-35 is required for activity.

Inhibitor of protein-phosphatase 1. This protein may be important in hormonal control of glycogen metabolism. Hormones that elevate intracellular cAMP increase I-1 activity in many tissues. I-1 activation may impose cAMP control over proteins that are not directly phosphorylated by PKA. Following a rise in intracellular calcium, I-1 is inactivated by calcineurin (or PP2B). Does not inhibit type-2 phosphatases. The sequence is that of Protein phosphatase 1 regulatory subunit 1A (Ppp1r1a) from Mus musculus (Mouse).